Consider the following 521-residue polypeptide: Glucose-6-phosphate isomerase (521 aa).

The Proton donor role is filled by E351. Catalysis depends on residues H382 and K491.

The protein belongs to the GPI family.

The protein localises to the cytoplasm. It catalyses the reaction alpha-D-glucose 6-phosphate = beta-D-fructose 6-phosphate. Its pathway is carbohydrate biosynthesis; gluconeogenesis. It participates in carbohydrate degradation; glycolysis; D-glyceraldehyde 3-phosphate and glycerone phosphate from D-glucose: step 2/4. In terms of biological role, catalyzes the reversible isomerization of glucose-6-phosphate to fructose-6-phosphate. The protein is Glucose-6-phosphate isomerase of Polaromonas naphthalenivorans (strain CJ2).